The chain runs to 437 residues: F-box protein At3g62430 (437 aa).

One can recognise an F-box domain in the interval Met-1–Ser-49.

The polypeptide is F-box protein At3g62430 (Arabidopsis thaliana (Mouse-ear cress)).